Consider the following 496-residue polypeptide: Cytochrome P450 3A56 (496 aa).

Cys441 serves as a coordination point for heme.

The protein belongs to the cytochrome P450 family. It depends on heme as a cofactor. In terms of tissue distribution, highly expressed in liver and intestine. Moderate expression in gill and spleen. Low expression in kidney, brain and heart.

Its subcellular location is the endoplasmic reticulum membrane. It is found in the microsome membrane. It carries out the reaction an organic molecule + reduced [NADPH--hemoprotein reductase] + O2 = an alcohol + oxidized [NADPH--hemoprotein reductase] + H2O + H(+). Its function is as follows. Putative steroid 6-beta-hydroxylase. The polypeptide is Cytochrome P450 3A56 (cyp3a56) (Fundulus heteroclitus (Killifish)).